A 120-amino-acid polypeptide reads, in one-letter code: Putative iron-sulfur cluster insertion protein ErpA (120 aa).

Cys49, Cys113, and Cys115 together coordinate iron-sulfur cluster.

This sequence belongs to the HesB/IscA family. As to quaternary structure, homodimer. The cofactor is iron-sulfur cluster.

Functionally, required for insertion of 4Fe-4S clusters. This chain is Putative iron-sulfur cluster insertion protein ErpA, found in Albidiferax ferrireducens (strain ATCC BAA-621 / DSM 15236 / T118) (Rhodoferax ferrireducens).